Here is a 367-residue protein sequence, read N- to C-terminus: Chorismate synthase (367 aa).

Arg-48 lines the NADP(+) pocket. FMN contacts are provided by residues 125–127 (RSS), 238–239 (NA), Gly-278, 293–297 (KPTSS), and Arg-319.

This sequence belongs to the chorismate synthase family. As to quaternary structure, homotetramer. It depends on FMNH2 as a cofactor.

It catalyses the reaction 5-O-(1-carboxyvinyl)-3-phosphoshikimate = chorismate + phosphate. Its pathway is metabolic intermediate biosynthesis; chorismate biosynthesis; chorismate from D-erythrose 4-phosphate and phosphoenolpyruvate: step 7/7. In terms of biological role, catalyzes the anti-1,4-elimination of the C-3 phosphate and the C-6 proR hydrogen from 5-enolpyruvylshikimate-3-phosphate (EPSP) to yield chorismate, which is the branch point compound that serves as the starting substrate for the three terminal pathways of aromatic amino acid biosynthesis. This reaction introduces a second double bond into the aromatic ring system. The protein is Chorismate synthase of Halorhodospira halophila (strain DSM 244 / SL1) (Ectothiorhodospira halophila (strain DSM 244 / SL1)).